We begin with the raw amino-acid sequence, 117 residues long: Large ribosomal subunit protein bL20 (117 aa).

This sequence belongs to the bacterial ribosomal protein bL20 family.

Its function is as follows. Binds directly to 23S ribosomal RNA and is necessary for the in vitro assembly process of the 50S ribosomal subunit. It is not involved in the protein synthesizing functions of that subunit. This chain is Large ribosomal subunit protein bL20, found in Rickettsia canadensis (strain McKiel).